Reading from the N-terminus, the 500-residue chain is Adenylosuccinate synthetase, chloroplastic (500 aa).

Residues 87–93 (GDEGKGK) and 115–117 (GHT) each bind GTP. The Proton acceptor role is filled by Asp-88. Residues Asp-88 and Gly-115 each coordinate Mg(2+). Residues 88–91 (DEGK), 113–116 (NAGH), Thr-205, Arg-219, Gln-299, Thr-314, and Arg-378 each bind IMP. His-116 acts as the Proton donor in catalysis. 374–380 (TTTGRPR) lines the substrate pocket. GTP-binding positions include Arg-380, 406–408 (KLD), and 489–491 (GIG).

This sequence belongs to the adenylosuccinate synthetase family. As to quaternary structure, homodimer. Requires Mg(2+) as cofactor.

The protein resides in the plastid. Its subcellular location is the chloroplast. The catalysed reaction is IMP + L-aspartate + GTP = N(6)-(1,2-dicarboxyethyl)-AMP + GDP + phosphate + 2 H(+). The protein operates within purine metabolism; AMP biosynthesis via de novo pathway; AMP from IMP: step 1/2. In terms of biological role, plays an important role in the de novo pathway and in the salvage pathway of purine nucleotide biosynthesis. Catalyzes the first committed step in the biosynthesis of AMP from IMP. The sequence is that of Adenylosuccinate synthetase, chloroplastic from Solanum bulbocastanum (Wild potato).